The primary structure comprises 351 residues: UDP-3-O-acylglucosamine N-acyltransferase (351 aa).

H257 acts as the Proton acceptor in catalysis.

The protein belongs to the transferase hexapeptide repeat family. LpxD subfamily. In terms of assembly, homotrimer.

The enzyme catalyses a UDP-3-O-[(3R)-3-hydroxyacyl]-alpha-D-glucosamine + a (3R)-hydroxyacyl-[ACP] = a UDP-2-N,3-O-bis[(3R)-3-hydroxyacyl]-alpha-D-glucosamine + holo-[ACP] + H(+). It functions in the pathway bacterial outer membrane biogenesis; LPS lipid A biosynthesis. Catalyzes the N-acylation of UDP-3-O-acylglucosamine using 3-hydroxyacyl-ACP as the acyl donor. Is involved in the biosynthesis of lipid A, a phosphorylated glycolipid that anchors the lipopolysaccharide to the outer membrane of the cell. This is UDP-3-O-acylglucosamine N-acyltransferase from Methylorubrum extorquens (strain PA1) (Methylobacterium extorquens).